Here is a 94-residue protein sequence, read N- to C-terminus: Small ribosomal subunit protein uS19 (94 aa).

It belongs to the universal ribosomal protein uS19 family.

Protein S19 forms a complex with S13 that binds strongly to the 16S ribosomal RNA. The protein is Small ribosomal subunit protein uS19 of Clostridium botulinum (strain Hall / ATCC 3502 / NCTC 13319 / Type A).